Consider the following 487-residue polypeptide: MAEIRKLKNYINGEWVESKTDQYEDVVNPATKEVLCQVPISTKEDIDYAAQTAAEAFETWSKVAVPRRARILFNFQQLLSQHKEELAHLITIENGKNTKEALGEVGRGIENVEFAAGAPSLMMGDSLASIATDVEAANYRYPIGVVGGIAPFNFPMMVPCWMFPMAIALGNTFILKPSERTPLLTEKLVELFEKAGLPKGVFNVVYGAHDVVNGILEHPEIKAISFVGSKPVGEYVYKKGSEHLKRVQSLTGAKNHTIVLNDANLEDTVTNIVGAAFGSAGERCMACAVVTVEEGIADEFMAKLQEKVADIKIGNGLDDGVFLGPVIREDNKKRTLSYIEKGLEEGARLVCDGRENVSDDGYFVGPTIFDNVTTEMTIWKDEIFAPVLSVIRVKNLKEAIEIANKSEFANGACLFTSNSNAIRYFRENIDAGMLGINLGVPAPMAFFPFSGWKSSFFGTLHANGKDSVDFYTRKKVVTARFPAPDFN.

NAD(+) contacts are provided by A150, F152, K176, E179, R180, S229, and T251. The active-site Nucleophile is the C284. E382 contributes to the NAD(+) binding site.

This sequence belongs to the aldehyde dehydrogenase family. IolA subfamily. Homotetramer.

The enzyme catalyses 3-oxopropanoate + NAD(+) + CoA + H2O = hydrogencarbonate + acetyl-CoA + NADH + H(+). The catalysed reaction is 2-methyl-3-oxopropanoate + NAD(+) + CoA + H2O = propanoyl-CoA + hydrogencarbonate + NADH + H(+). Its pathway is polyol metabolism; myo-inositol degradation into acetyl-CoA; acetyl-CoA from myo-inositol: step 7/7. In terms of biological role, catalyzes the oxidation of malonate semialdehyde (MSA) and methylmalonate semialdehyde (MMSA) into acetyl-CoA and propanoyl-CoA, respectively. Is involved in a myo-inositol catabolic pathway. Bicarbonate, and not CO2, is the end-product of the enzymatic reaction. In Bacillus subtilis subsp. natto, this protein is Malonate-semialdehyde dehydrogenase.